Here is a 483-residue protein sequence, read N- to C-terminus: Docking protein 1 (483 aa).

Residue methionine 1 is modified to N-acetylmethionine. One can recognise a PH domain in the interval 4-119; it reads AVMEGPLFLQ…WVQTLCQNAF (116 aa). Serine 48 is modified (phosphoserine). The IRS-type PTB domain maps to 151 to 259; the sequence is EGSQFWVTVQ…HRQKIQGKAG (109 aa). Serine 269 and serine 291 each carry phosphoserine. A disordered region spans residues 293–326; it reads PALYSEPLDSLRIPPGPSQDSLYSDPLDSTPARA. Phosphotyrosine occurs at positions 296, 337, 362, 377, 398, and 409. The tract at residues 409–483 is disordered; the sequence is YAVPPPRSTK…RTGAKSEGST (75 aa). Residues 411-424 show a composition bias toward pro residues; sequence VPPPRSTKPFPAPK. Serine 416 is modified (phosphoserine). Positions 434 to 460 are enriched in polar residues; sequence GAATGSGSQGHSSDTALYSQVQKSGAS. Tyrosine 451 is modified (phosphotyrosine). Serine 462 carries the post-translational modification Phosphoserine.

Belongs to the DOK family. Type A subfamily. As to quaternary structure, interacts with RasGAP, INPP5D/SHIP1 and ABL1. Interacts directly with phosphorylated ITGB3. Interacts with SRMS (via the SH2 and SH3 domains). Constitutively tyrosine-phosphorylated. Phosphorylated by TEC. Phosphorylated by LYN. Phosphorylated on tyrosine residues by the insulin receptor kinase. Results in the negative regulation of the insulin signaling pathway. Phosphorylated on tyrosine residues by SRMS.

Its subcellular location is the cytoplasm. The protein localises to the nucleus. DOK proteins are enzymatically inert adaptor or scaffolding proteins. They provide a docking platform for the assembly of multimolecular signaling complexes. DOK1 appears to be a negative regulator of the insulin signaling pathway. Modulates integrin activation by competing with talin for the same binding site on ITGB3. In Bos taurus (Bovine), this protein is Docking protein 1 (DOK1).